Reading from the N-terminus, the 382-residue chain is Neuropeptide Y receptor type 1 (382 aa).

Residues Met1–His33 lie on the Extracellular side of the membrane. Residues Asn2, Asn11, and Asn17 are each glycosylated (N-linked (GlcNAc...) asparagine). The helical transmembrane segment at Leu34–Val54 threads the bilayer. Residues Ser55–Asn75 are Cytoplasmic-facing. The helical transmembrane segment at Ile76–Thr96 threads the bilayer. At Phe97 to Asn115 the chain is on the extracellular side. An intrachain disulfide couples Cys112 to Cys197. A helical transmembrane segment spans residues Pro116–Glu136. Residues Arg137–His153 lie on the Cytoplasmic side of the membrane. A helical transmembrane segment spans residues Ala154–Ile174. Topologically, residues Tyr175 to Tyr210 are extracellular. The chain crosses the membrane as a helical span at residues Thr211–Phe231. Residues Lys232–Arg259 lie on the Cytoplasmic side of the membrane. The helical transmembrane segment at Ile260–Ile280 threads the bilayer. The Extracellular portion of the chain corresponds to Phe281–Asn298. Residues Leu299–Tyr319 form a helical membrane-spanning segment. The Cytoplasmic portion of the chain corresponds to Gly320–Val382. A lipid anchor (S-palmitoyl cysteine) is attached at Cys337. 2 positions are modified to phosphoserine: Ser367 and Ser375.

Belongs to the G-protein coupled receptor 1 family. The alpha form is highly expressed in the brain, heart, kidney, spleen, skeletal muscle, and lung, whereas the beta receptor mRNA was not detected in these tissues. However, the beta form is expressed in mouse embryonic developmental stage (7 and 11 days), bone marrow cells and several hematopoietic cell lines.

The protein localises to the cell membrane. In terms of biological role, receptor for neuropeptide Y and peptide YY. The chain is Neuropeptide Y receptor type 1 (Npy1r) from Mus musculus (Mouse).